The following is a 466-amino-acid chain: Uronate isomerase (466 aa).

Belongs to the metallo-dependent hydrolases superfamily. Uronate isomerase family.

It carries out the reaction D-glucuronate = D-fructuronate. The catalysed reaction is aldehydo-D-galacturonate = keto-D-tagaturonate. It functions in the pathway carbohydrate metabolism; pentose and glucuronate interconversion. The chain is Uronate isomerase from Brucella canis (strain ATCC 23365 / NCTC 10854 / RM-666).